We begin with the raw amino-acid sequence, 199 residues long: GTP-binding protein Di-Ras2 (199 aa).

Residues 14 to 21, 33 to 39, 61 to 65, and 121 to 124 each bind GTP; these read GAGGVGKS, RESYIPT, DTTGS, and NKCD. The residue at position 35 (serine 35) is a Phosphoserine. An Effector region motif is present at residues 36 to 44; it reads YIPTVEDTY. Residue serine 126 is modified to Phosphoserine. A GTP-binding site is contributed by 152 to 153; sequence AK. The residue at position 196 (cysteine 196) is a Cysteine methyl ester. Cysteine 196 is lipidated: S-geranylgeranyl cysteine. Residues 197-199 constitute a propeptide, removed in mature form; that stretch reads VIM.

The protein belongs to the small GTPase superfamily. Di-Ras family. In terms of processing, ubiquitinated by the ECS(ASB11) complex via 'Lys-11'-linked ubiquitin chains, leading to its degradation by the proteasome.

It localises to the cell membrane. The catalysed reaction is GTP + H2O = GDP + phosphate + H(+). Functionally, displays low GTPase activity and exists predominantly in the GTP-bound form. In Macaca fascicularis (Crab-eating macaque), this protein is GTP-binding protein Di-Ras2 (DIRAS2).